A 157-amino-acid polypeptide reads, in one-letter code: uncharacterized protein (157 aa).

This is an uncharacterized protein from Pseudoalteromonas espejiana (Bacteriophage PM2).